A 455-amino-acid polypeptide reads, in one-letter code: CDP-diacylglycerol--serine O-phosphatidyltransferase (455 aa).

PLD phosphodiesterase domains lie at 134 to 160 (VFGV…NNVY) and 356 to 383 (GDNT…NPRA).

It belongs to the CDP-alcohol phosphatidyltransferase class-II family. In terms of assembly, multimeric.

It is found in the cytoplasm. It localises to the cell inner membrane. The enzyme catalyses a CDP-1,2-diacyl-sn-glycerol + L-serine = a 1,2-diacyl-sn-glycero-3-phospho-L-serine + CMP + H(+). The polypeptide is CDP-diacylglycerol--serine O-phosphatidyltransferase (pssA) (Haemophilus influenzae (strain ATCC 51907 / DSM 11121 / KW20 / Rd)).